The primary structure comprises 169 residues: Ribosome maturation factor RimP (169 aa).

The protein belongs to the RimP family.

The protein resides in the cytoplasm. Required for maturation of 30S ribosomal subunits. This Pseudomonas putida (strain W619) protein is Ribosome maturation factor RimP.